Consider the following 215-residue polypeptide: Protein-L-isoaspartate O-methyltransferase 1 (215 aa).

S61 is a catalytic residue.

It belongs to the methyltransferase superfamily. L-isoaspartyl/D-aspartyl protein methyltransferase family.

Its subcellular location is the cytoplasm. The enzyme catalyses [protein]-L-isoaspartate + S-adenosyl-L-methionine = [protein]-L-isoaspartate alpha-methyl ester + S-adenosyl-L-homocysteine. In terms of biological role, catalyzes the methyl esterification of L-isoaspartyl residues in peptides and proteins that result from spontaneous decomposition of normal L-aspartyl and L-asparaginyl residues. It plays a role in the repair and/or degradation of damaged proteins. The protein is Protein-L-isoaspartate O-methyltransferase 1 of Pelobacter propionicus (strain DSM 2379 / NBRC 103807 / OttBd1).